Reading from the N-terminus, the 409-residue chain is Glycoprotein 55 (409 aa).

Positions 1–32 are cleaved as a signal peptide; sequence MEGPASSKPLKDKTNPWGPLIILGILIRAGVS. The Virion surface segment spans residues 33–384; it reads VQLDSPHQVS…SSNRSPWFTT (352 aa). 2 N-linked (GlcNAc...) asparagine; by host glycosylation sites follow: Asn-43 and Asn-58. Residues 232–280 are disordered; it reads PIGSNPVTTDQLPLSRPVQTMPPRPLQPPPPGAASIVPETAPPPQQPGA. Over residues 251–263 the composition is skewed to pro residues; that stretch reads TMPPRPLQPPPPG. N-linked (GlcNAc...) asparagine; by host glycans are attached at residues Asn-296 and Asn-328. The chain crosses the membrane as a helical span at residues 385-405; that stretch reads LISAIMGSLIILLLLLILLIW. Over 406–409 the chain is Intravirion; the sequence is TLYS.

In terms of assembly, homooligomer. Forms heterooligomers with mouse EPOR, probably via their respective transmembrane domains. Forms covalent heterodimers with mouse MST1R isoform sf-Stk, probably via disulfide bonds.

The protein resides in the host endoplasmic reticulum membrane. It is found in the host cell membrane. The protein localises to the virion membrane. This envelope-like membrane glycoprotein is responsible for ligand-independent activation of the erythropoietin receptor EPOR leading to the abnormally rapid proliferation of erythroid precursor cells. In the first stage of Friend disease, constitutive activation of EPOR by gp55 causes uncontrolled, polyclonal proliferation of infected erythroblasts, leading to polycythemia (massive increase in the number of mature red cells). Host susceptibility to SSFV-induced erythroblastosis depends on the expression of the truncated isoform of MST1R receptor tyrosine kinase (MST1R isoform sf-Stk). Interaction with SSFV gp 55 results in constitutive tyrosine phosphorylation and activation of MST1R isoform sf-Stk. The chain is Glycoprotein 55 (env) from Mus musculus (Mouse).